Here is a 370-residue protein sequence, read N- to C-terminus: Gibberellin 3-beta-dioxygenase 2-1 (370 aa).

In terms of domain architecture, Fe2OG dioxygenase spans 205–306 (MTATMHLNWY…RISLGYFLGP (102 aa)). Fe cation contacts are provided by His-229, Asp-231, and His-287. Arg-297 is an active-site residue.

This sequence belongs to the iron/ascorbate-dependent oxidoreductase family. GA3OX subfamily. L-ascorbate serves as cofactor. Fe cation is required as a cofactor. As to expression, expressed in internodes, nodes and the ear of the elongating stem.

It carries out the reaction gibberellin A20 + 2-oxoglutarate + O2 = gibberellin A1 + succinate + CO2. In terms of biological role, converts the inactive gibberellin precursors GA9 and GA20 in the bioactives gibberellins GA4 and GA1. Also accepts GA15, GA44, the 2,3-unsaturated GA5 and 2,3-dihydroGA9 as substrate. No activity with GA12, GA53, GA24, GA19 and GA25. Also possesses 2-beta-hydroxylase, 2,3-desaturase, 2,3-epoxidase and 13-hydroxylase activities. The sequence is that of Gibberellin 3-beta-dioxygenase 2-1 (GA3ox2-1) from Triticum aestivum (Wheat).